The primary structure comprises 145 residues: Deoxyuridine 5'-triphosphate nucleotidohydrolase (145 aa).

Substrate is bound by residues 62 to 64, asparagine 75, and 79 to 81; these read RSG and TVD.

This sequence belongs to the dUTPase family. It depends on Mg(2+) as a cofactor.

It carries out the reaction dUTP + H2O = dUMP + diphosphate + H(+). It functions in the pathway pyrimidine metabolism; dUMP biosynthesis; dUMP from dCTP (dUTP route): step 2/2. Its function is as follows. This enzyme is involved in nucleotide metabolism: it produces dUMP, the immediate precursor of thymidine nucleotides and it decreases the intracellular concentration of dUTP so that uracil cannot be incorporated into DNA. This chain is Deoxyuridine 5'-triphosphate nucleotidohydrolase, found in Gloeothece citriformis (strain PCC 7424) (Cyanothece sp. (strain PCC 7424)).